Consider the following 215-residue polypeptide: MRLILLGPPGAGKGTQAKRVIEEFDIPHISTGDIFRKNIKEKTELGQKVEGLLAQGKLVPDELTIEIVWDRLDQEDCKNGFLLDGFPRTIPQAEALDEGLAKRGLKLDRVLNIDVDKDSLVKRLSGRRVCPSCGASYHIDNNPTKVDGICDACQTPVIQREDDKEETVLDRIKVYDSQTKPLVDFYNKQDLVFTVDGTLPIDEITNKLVTELKKG.

An ATP-binding site is contributed by 10–15; it reads GAGKGT. Residues 30-59 are NMP; the sequence is STGDIFRKNIKEKTELGQKVEGLLAQGKLV. Residues Thr31, Arg36, 57 to 59, 85 to 88, and Gln92 contribute to the AMP site; these read KLV and GFPR. Residues 126 to 163 form an LID region; that stretch reads GRRVCPSCGASYHIDNNPTKVDGICDACQTPVIQREDD. Arg127 is a binding site for ATP. 2 residues coordinate Zn(2+): Cys130 and Cys133. 136–137 contacts ATP; the sequence is SY. Residues Cys150 and Cys153 each coordinate Zn(2+). AMP-binding residues include Arg160 and Arg171. Position 199 (Leu199) interacts with ATP.

This sequence belongs to the adenylate kinase family. Monomer.

The protein resides in the cytoplasm. It carries out the reaction AMP + ATP = 2 ADP. The protein operates within purine metabolism; AMP biosynthesis via salvage pathway; AMP from ADP: step 1/1. Its function is as follows. Catalyzes the reversible transfer of the terminal phosphate group between ATP and AMP. Plays an important role in cellular energy homeostasis and in adenine nucleotide metabolism. The polypeptide is Adenylate kinase (Finegoldia magna (strain ATCC 29328 / DSM 20472 / WAL 2508) (Peptostreptococcus magnus)).